The primary structure comprises 72 residues: Cytochrome c oxidase copper chaperone 2 (72 aa).

2 residues coordinate Cu cation: Cys32 and Cys33. Residues 32 to 72 form the CHCH domain; the sequence is CCACPDTKKLRDECIVEHGESACTKWIEAHILCLRSEGFKV. 2 consecutive short sequence motifs (cx9C motif) follow at residues 35–45 and 54–64; these read CPDTKKLRDEC and CTKWIEAHILC. Intrachain disulfides connect Cys35–Cys64 and Cys45–Cys54.

It belongs to the COX17 family.

Its subcellular location is the mitochondrion intermembrane space. In terms of biological role, copper chaperone for cytochrome c oxidase (COX). Binds 2 copper ions and delivers them to the Cu(A) site of COX. The chain is Cytochrome c oxidase copper chaperone 2 (COX17-2) from Arabidopsis thaliana (Mouse-ear cress).